The following is a 134-amino-acid chain: Translation initiation factor 2 subunit beta (134 aa).

It belongs to the eIF-2-beta/eIF-5 family. Heterotrimer composed of an alpha, a beta and a gamma chain.

Its function is as follows. eIF-2 functions in the early steps of protein synthesis by forming a ternary complex with GTP and initiator tRNA. This chain is Translation initiation factor 2 subunit beta, found in Pyrobaculum calidifontis (strain DSM 21063 / JCM 11548 / VA1).